The chain runs to 732 residues: Photosystem I P700 chlorophyll a apoprotein A1 (732 aa).

8 helical membrane passes run 61–84, 145–168, 185–209, 278–296, 317–340, 356–382, 414–436, and 510–528; these read VFSS…FHGA, LKYA…FHMH, NAGQ…HIAL, IASH…GIIA, WHSR…HHIY, LSLF…IFMI, IIMG…IYIH, and FMVH…LILM. 2 residues coordinate [4Fe-4S] cluster: cysteine 552 and cysteine 561. 2 helical membrane passes run 568 to 589 and 644 to 666; these read HVFL…HFFW and LSGY…MFLW. Histidine 655 is a chlorophyll a' binding site. Chlorophyll a-binding residues include methionine 663 and tyrosine 671. Tryptophan 672 is a phylloquinone binding site. A helical transmembrane segment spans residues 704-724; that stretch reads AVGLVHYMLGGIGTTWAFFLA.

The protein belongs to the PsaA/PsaB family. In terms of assembly, the PsaA/B heterodimer binds the P700 chlorophyll special pair and subsequent electron acceptors. PSI consists of a core antenna complex that captures photons, and an electron transfer chain that converts photonic excitation into a charge separation. The eukaryotic PSI reaction center is composed of at least 11 subunits. P700 is a chlorophyll a/chlorophyll a' dimer, A0 is one or more chlorophyll a, A1 is one or both phylloquinones and FX is a shared 4Fe-4S iron-sulfur center. is required as a cofactor.

The protein resides in the plastid. The protein localises to the chloroplast thylakoid membrane. It catalyses the reaction reduced [plastocyanin] + hnu + oxidized [2Fe-2S]-[ferredoxin] = oxidized [plastocyanin] + reduced [2Fe-2S]-[ferredoxin]. Its function is as follows. PsaA and PsaB bind P700, the primary electron donor of photosystem I (PSI), as well as the electron acceptors A0, A1 and FX. PSI is a plastocyanin/cytochrome c6-ferredoxin oxidoreductase, converting photonic excitation into a charge separation, which transfers an electron from the donor P700 chlorophyll pair to the spectroscopically characterized acceptors A0, A1, FX, FA and FB in turn. Oxidized P700 is reduced on the lumenal side of the thylakoid membrane by plastocyanin or cytochrome c6. This is Photosystem I P700 chlorophyll a apoprotein A1 from Heterocapsa triquetra (Dinoflagellate).